Reading from the N-terminus, the 116-residue chain is Flagellar transcriptional regulator FlhD (116 aa).

The protein belongs to the FlhD family. As to quaternary structure, homodimer; disulfide-linked. Forms a heterohexamer composed of two FlhC and four FlhD subunits. Each FlhC binds a FlhD dimer, forming a heterotrimer, and a hexamer assembles by dimerization of two heterotrimers.

Its subcellular location is the cytoplasm. Functions in complex with FlhC as a master transcriptional regulator that regulates transcription of several flagellar and non-flagellar operons by binding to their promoter region. Activates expression of class 2 flagellar genes, including fliA, which is a flagellum-specific sigma factor that turns on the class 3 genes. Also regulates genes whose products function in a variety of physiological pathways. The sequence is that of Flagellar transcriptional regulator FlhD from Enterobacter sp. (strain 22).